Here is a 548-residue protein sequence, read N- to C-terminus: Terpene synthase 1 (548 aa).

Mg(2+) is bound by residues aspartate 301, aspartate 305, aspartate 445, and glutamate 453. The DDXXD motif signature appears at 301-305; sequence DDTYD.

Belongs to the terpene synthase family. Tpsa subfamily. Requires Mg(2+) as cofactor. Mn(2+) serves as cofactor.

The catalysed reaction is (2E,6E)-farnesyl diphosphate = (+)-valencene + diphosphate. It participates in secondary metabolite biosynthesis; terpenoid biosynthesis. Sesquiterpene synthase involved in the biosynthesis of volatile compounds which contribute to fruit flavor and aroma. Mediates the conversion of (2E,6E)-farnesyl diphosphate (FPP) into (+)-valencene. No activity detected with geranyl diphosphate (GPP). This chain is Terpene synthase 1, found in Citrus sinensis (Sweet orange).